Reading from the N-terminus, the 326-residue chain is Balbiani ring protein 1 (326 aa).

A compositionally biased stretch (low complexity) spans 1–33 (PSKSGPRPSKSGPRPSKSGPRPSKSGPRPSKSG). Positions 1–119 (PSKSGPRPSK…RESPVCDDAM (119 aa)) are disordered. Positions 34–51 (PRPEKCGSAMRKAEAEKC) are enriched in basic and acidic residues. Residues 93–102 (VTPTPEVPTT) are compositionally biased toward low complexity. Basic and acidic residues predominate over residues 107-119 (SESRESPVCDDAM).

As to expression, salivary gland.

The protein localises to the secreted. Functionally, used by the larvae to construct a supramolecular structure, the larval tube. The sequence is that of Balbiani ring protein 1 (BR1) from Chironomus pallidivittatus (Midge).